Consider the following 277-residue polypeptide: Tryptophan synthase alpha chain (277 aa).

Catalysis depends on proton acceptor residues E43 and E54.

This sequence belongs to the TrpA family. In terms of assembly, tetramer of two alpha and two beta chains.

The catalysed reaction is (1S,2R)-1-C-(indol-3-yl)glycerol 3-phosphate + L-serine = D-glyceraldehyde 3-phosphate + L-tryptophan + H2O. It functions in the pathway amino-acid biosynthesis; L-tryptophan biosynthesis; L-tryptophan from chorismate: step 5/5. The alpha subunit is responsible for the aldol cleavage of indoleglycerol phosphate to indole and glyceraldehyde 3-phosphate. This Haloferax volcanii (strain ATCC 29605 / DSM 3757 / JCM 8879 / NBRC 14742 / NCIMB 2012 / VKM B-1768 / DS2) (Halobacterium volcanii) protein is Tryptophan synthase alpha chain.